The sequence spans 179 residues: Stathmin-2 (179 aa).

Residues 1 to 26 (MAKTAMAYKEKMKELSMLSLICSCFY) form a membrane attachment region. The residue at position 16 (S16) is a Phosphoserine. S-palmitoyl cysteine attachment occurs at residues C22 and C24. The SLD domain occupies 38–179 (DDMEVKQINK…NKELQVELSG (142 aa)). The regulatory/phosphorylation domain stretch occupies residues 39–96 (DMEVKQINKRASGQAFELILKPPSPISEAPRTLASPKKKDLSLEEIQKKLEAAEGRRK). The residue at position 50 (S50) is a Phosphoserine. Phosphoserine; by MAPK8 is present on residues S62 and S73. A coiled-coil region spans residues 75-179 (KKKDLSLEEI…NKELQVELSG (105 aa)). Phosphoserine occurs at positions 80 and 97.

The protein belongs to the stathmin family. Interacts with ITM2C. Interacts with MAPK8. Interacts with KIFBP. Interacts (via the N-terminal region) with CIB1 (via C-terminal region); the interaction is direct, occurs in a calcium-dependent manner and attenuates the neurite outgrowth inhibition of STMN2. In terms of processing, sumoylated. Post-translationally, phosphorylated by MAPK9 and MAPK10 in the developing brain cortex. Phosphorylated mostly by MAPK8. N-terminal palmitoylation promotes specific anchoring to the cytosolic leaflet of Golgi membranes and subsequent vesicular trafficking along dendrites and axons. Neuronal Stathmins are substrates for palmitoyltransferases ZDHHC3, ZDHHC7 and ZDHHC15. Expressed in neurons (at protein level). Present in growth cones and abundant in developing neurons.

It localises to the cytoplasm. It is found in the perinuclear region. Its subcellular location is the cell projection. The protein localises to the growth cone. The protein resides in the axon. It localises to the membrane. It is found in the golgi apparatus. Its subcellular location is the endosome. The protein localises to the lamellipodium. In terms of biological role, regulator of microtubule stability. When phosphorylated by MAPK8, stabilizes microtubules and consequently controls neurite length in cortical neurons. In the developing brain, negatively regulates the rate of exit from multipolar stage and retards radial migration from the ventricular zone. This chain is Stathmin-2 (Stmn2), found in Rattus norvegicus (Rat).